The primary structure comprises 215 residues: UPF0502 protein YceH (215 aa).

Lysine 80 is modified (N6-acetyllysine).

This sequence belongs to the UPF0502 family.

This Escherichia coli O7:K1 (strain IAI39 / ExPEC) protein is UPF0502 protein YceH.